Here is an 821-residue protein sequence, read N- to C-terminus: Protein EFR3 homolog A (821 aa).

A phosphoserine mark is found at S360, S363, S422, and S694.

The protein belongs to the EFR3 family. In terms of assembly, component of a phosphatidylinositol 4-kinase (PI4K) complex, composed of PI4KA, EFR3 (EFR3A or EFR3B), TTC7 (TTC7A or TTC7B) and HYCC (HYCC1 or HYCC2). Palmitoylated at its N-terminus, anchoring the protein to the plasma membrane.

Its subcellular location is the cell membrane. It is found in the cytoplasm. The protein localises to the cytosol. Functionally, component of a complex required to localize phosphatidylinositol 4-kinase (PI4K) to the plasma membrane. The complex acts as a regulator of phosphatidylinositol 4-phosphate (PtdIns(4)P) synthesis. In the complex, EFR3A probably acts as the membrane-anchoring component. Also involved in responsiveness to G-protein-coupled receptors; it is however unclear whether this role is direct or indirect. This is Protein EFR3 homolog A from Homo sapiens (Human).